The chain runs to 267 residues: Malonyl-[acyl-carrier protein] O-methyltransferase (267 aa).

This sequence belongs to the methyltransferase superfamily.

The enzyme catalyses malonyl-[ACP] + S-adenosyl-L-methionine = malonyl-[ACP] methyl ester + S-adenosyl-L-homocysteine. It participates in cofactor biosynthesis; biotin biosynthesis. Converts the free carboxyl group of a malonyl-thioester to its methyl ester by transfer of a methyl group from S-adenosyl-L-methionine (SAM). It allows to synthesize pimeloyl-ACP via the fatty acid synthetic pathway. The chain is Malonyl-[acyl-carrier protein] O-methyltransferase from Geobacter sulfurreducens (strain ATCC 51573 / DSM 12127 / PCA).